The following is a 2205-amino-acid chain: Genome polyprotein (2205 aa).

Residue glycine 2 is the site of N-myristoyl glycine; by host attachment. The Cytoplasmic segment spans residues 2-1518 (GAQVSSQKVG…NINRAMTILQ (1517 aa)). An amphipathic alpha-helix region spans residues 579 to 599 (GLGDLIEGVVEGVTRNALTPL). Over residues 598–613 (PLTPVNNLPDTRSSGP) the composition is skewed to polar residues. The disordered stretch occupies residues 598–619 (PLTPVNNLPDTRSSGPAHSKET). Residues histidine 899 and aspartate 917 each act as for protease 2A activity in the active site. Zn(2+) is bound by residues cysteine 934 and cysteine 936. Catalysis depends on cysteine 988, which acts as the For protease 2A activity. Residues cysteine 994 and histidine 996 each coordinate Zn(2+). The membrane-binding stretch occupies residues 1126-1198 (GDSWLKKFTE…HQSCPSQEHQ (73 aa)). The tract at residues 1126-1264 (GDSWLKKFTE…SPGTGKSVAT (139 aa)) is oligomerization. The tract at residues 1147-1151 (SNKIS) is RNA-binding. Residues 1230-1386 (EHTINNYVQF…SEYSRDGKLN (157 aa)) enclose the SF3 helicase domain. 1254 to 1261 (GSPGTGKS) is an ATP binding site. Residues cysteine 1394, cysteine 1397, cysteine 1406, and cysteine 1411 each contribute to the Zn(2+) site. The segment at 1394 to 1411 (CKNCHQPANFKRCCPLVC) adopts a C4-type zinc-finger fold. The interval 1438–1445 (ERNRRSSI) is RNA-binding. The oligomerization stretch occupies residues 1449–1454 (MEALFQ). Residues 1519-1534 (AVTTFAAVAGVVYVMY) lie within the membrane without spanning it. The Cytoplasmic segment spans residues 1535-2205 (KLFAGHQGAY…TLYRRWLDSF (671 aa)). Tyrosine 1544 carries the post-translational modification O-(5'-phospho-RNA)-tyrosine. The Peptidase C3 domain occupies 1564-1742 (GPGFDYAVAM…FAAALKRSYF (179 aa)). Catalysis depends on for protease 3C activity residues histidine 1603, glutamate 1634, and cysteine 1710. Positions 1971–2086 (MEEKLFDYTG…SYPHEVDASL (116 aa)) constitute a RdRp catalytic domain. The Mg(2+) site is built by aspartate 1977 and aspartate 2072.

The protein belongs to the picornaviruses polyprotein family. In terms of assembly, interacts with capsid protein VP1 and capsid protein VP3 to form heterotrimeric protomers. Interacts with capsid protein VP0, and capsid protein VP3 to form heterotrimeric protomers. Interacts with human PVR. Five protomers subsequently associate to form pentamers which serve as building blocks for the capsid. Interacts with capsid protein VP2, capsid protein VP3 and capsid protein VP4 following cleavage of capsid protein VP0. As to quaternary structure, interacts with capsid protein VP1 and capsid protein VP3 in the mature capsid. In terms of assembly, interacts with capsid protein VP0 and capsid protein VP1 to form heterotrimeric protomers. Five protomers subsequently associate to form pentamers which serve as building blocks for the capsid. Interacts with capsid protein VP4 in the mature capsid. Interacts with protein 2C; this interaction may be important for virion morphogenesis. Interacts with capsid protein VP1 and capsid protein VP3. As to quaternary structure, homodimer. In terms of assembly, homohexamer; forms a hexameric ring structure with 6-fold symmetry characteristic of AAA+ ATPases. Interacts (via N-terminus) with host RTN3 (via reticulon domain); this interaction is important for viral replication. Interacts with capsid protein VP3; this interaction may be important for virion morphogenesis. Interacts with protein 3CD. As to quaternary structure, homodimer. Interacts with host GBF1. Interacts (via GOLD domain) with host ACBD3 (via GOLD domain); this interaction allows the formation of a viral protein 3A/ACBD3 heterotetramer with a 2:2 stoichiometry, which will stimulate the recruitment of host PI4KB in order to synthesize PI4P at the viral RNA replication sites. In terms of assembly, interacts with RNA-directed RNA polymerase. Interacts with protein 3AB and with RNA-directed RNA polymerase. As to quaternary structure, interacts with Viral protein genome-linked and with protein 3CD. Mg(2+) is required as a cofactor. In terms of processing, specific enzymatic cleavages in vivo by the viral proteases yield processing intermediates and the mature proteins. Myristoylation is required for the formation of pentamers during virus assembly. Further assembly of 12 pentamers and a molecule of genomic RNA generates the provirion. Post-translationally, during virion maturation, immature virions are rendered infectious following cleavage of VP0 into VP4 and VP2. This maturation seems to be an autocatalytic event triggered by the presence of RNA in the capsid and it is followed by a conformational change infectious virion. In terms of processing, myristoylation is required during RNA encapsidation and formation of the mature virus particle. VPg is uridylylated by the polymerase into VPg-pUpU. This acts as a nucleotide-peptide primer for the genomic RNA replication.

The protein resides in the virion. The protein localises to the host cytoplasm. Its subcellular location is the host cytoplasmic vesicle membrane. It localises to the host nucleus. The catalysed reaction is a ribonucleoside 5'-triphosphate + H2O = a ribonucleoside 5'-diphosphate + phosphate + H(+). The enzyme catalyses Selective cleavage of Tyr-|-Gly bond in the picornavirus polyprotein.. It catalyses the reaction RNA(n) + a ribonucleoside 5'-triphosphate = RNA(n+1) + diphosphate. It carries out the reaction Selective cleavage of Gln-|-Gly bond in the poliovirus polyprotein. In other picornavirus reactions Glu may be substituted for Gln, and Ser or Thr for Gly.. Replication or transcription is subject to high level of random mutations by the nucleotide analog ribavirin. In terms of biological role, forms an icosahedral capsid of pseudo T=3 symmetry with capsid proteins VP2 and VP3. The capsid is 300 Angstroms in diameter, composed of 60 copies of each capsid protein and enclosing the viral positive strand RNA genome. Capsid protein VP1 mainly forms the vertices of the capsid. Capsid protein VP1 interacts with host cell receptor PVR to provide virion attachment to target host cells. This attachment induces virion internalization predominantly through clathrin- and caveolin-independent endocytosis in Hela cells and through caveolin-mediated endocytosis in brain microvascular endothelial cells. Tyrosine kinases are probably involved in the entry process. Virus binding to PVR induces increased junctional permeability and rearrangement of junctional proteins. Modulation of endothelial tight junctions, as well as cytolytic infection of endothelial cells themselves, may result in loss of endothelial integrity which may help the virus to reach the CNS. After binding to its receptor, the capsid undergoes conformational changes. Capsid protein VP1 N-terminus (that contains an amphipathic alpha-helix) and capsid protein VP4 are externalized. Together, they shape a pore in the host membrane through which viral genome is translocated to host cell cytoplasm. Forms an icosahedral capsid of pseudo T=3 symmetry with capsid proteins VP2 and VP3. The capsid is 300 Angstroms in diameter, composed of 60 copies of each capsid protein and enclosing the viral positive strand RNA genome. Functionally, lies on the inner surface of the capsid shell. After binding to the host receptor, the capsid undergoes conformational changes. Capsid protein VP4 is released, Capsid protein VP1 N-terminus is externalized, and together, they shape a pore in the host membrane through which the viral genome is translocated into the host cell cytoplasm. Its function is as follows. Component of immature procapsids, which is cleaved into capsid proteins VP4 and VP2 after maturation. Allows the capsid to remain inactive before the maturation step. In terms of biological role, cysteine protease that cleaves viral polyprotein and specific host proteins. It is responsible for the autocatalytic cleavage between the P1 and P2 regions, which is the first cleavage occurring in the polyprotein. Also cleaves the host translation initiation factor EIF4G1, in order to shut down the capped cellular mRNA translation. Inhibits the host nucleus-cytoplasm protein and RNA trafficking by cleaving host members of the nuclear pores including NUP98, NUP62 and NUP153. Counteracts stress granule formation probably by antagonizing its assembly or promoting its dissassembly. Cleaves and inhibits host IFIH1/MDA5, thereby inhibiting the type-I IFN production and the establishment of the antiviral state. Cleaves and inhibits host MAVS, thereby inhibiting the type-I IFN production and the establishment of the antiviral state. Plays an essential role in the virus replication cycle by acting as a viroporin. Creates a pore in the host endoplasmic reticulum and as a consequence releases Ca2+ in the cytoplasm of infected cell. In turn, high levels of cytoplasmic calcium may trigger membrane trafficking and transport of viral ER-associated proteins to viroplasms, sites of viral genome replication. Functionally, induces and associates with structural rearrangements of intracellular membranes. Displays RNA-binding, nucleotide binding and NTPase activities. May play a role in virion morphogenesis and viral RNA encapsidation by interacting with the capsid protein VP3. Its function is as follows. Localizes the viral replication complex to the surface of membranous vesicles. Together with protein 3CD binds the Cis-Active RNA Element (CRE) which is involved in RNA synthesis initiation. Acts as a cofactor to stimulate the activity of 3D polymerase, maybe through a nucleid acid chaperone activity. In terms of biological role, localizes the viral replication complex to the surface of membranous vesicles. It inhibits host cell endoplasmic reticulum-to-Golgi apparatus transport and causes the disassembly of the Golgi complex, possibly through GBF1 interaction. This would result in depletion of MHC, trail receptors and IFN receptors at the host cell surface. Plays an essential role in viral RNA replication by recruiting ACBD3 and PI4KB at the viral replication sites, thereby allowing the formation of the rearranged membranous structures where viral replication takes place. Acts as a primer for viral RNA replication and remains covalently bound to viral genomic RNA. VPg is uridylylated prior to priming replication into VPg-pUpU. The oriI viral genomic sequence may act as a template for this. The VPg-pUpU is then used as primer on the genomic RNA poly(A) by the RNA-dependent RNA polymerase to replicate the viral genome. During genome replication, the VPg-RNA linkage is removed by the host TDP2, thereby accelerating replication. During the late stage of the replication cycle, host TDP2 is excluded from sites of viral RNA synthesis and encapsidation, allowing for the generation of progeny virions. Functionally, involved in the viral replication complex and viral polypeptide maturation. It exhibits protease activity with a specificity and catalytic efficiency that is different from protease 3C. Protein 3CD lacks polymerase activity. Protein 3CD binds to the 5'UTR of the viral genome. Its function is as follows. Major viral protease that mediates proteolytic processing of the polyprotein. Cleaves host EIF5B, contributing to host translation shutoff. Also cleaves host PABPC1, contributing to host translation shutoff. Cleaves host RIGI and thus contributes to the inhibition of type I interferon production. Cleaves host NLRP1, triggers host N-glycine-mediated degradation of the autoinhibitory NLRP1 N-terminal fragment. Inhibits the integrated stress response (ISR) in the infected cell by cleaving host G3BP1. Stress granule formation is thus inhibited, which allows protein synthesis and viral replication. In terms of biological role, replicates the viral genomic RNA on the surface of intracellular membranes. May form linear arrays of subunits that propagate along a strong head-to-tail interaction called interface-I. Covalently attaches UMP to a tyrosine of VPg, which is used to prime RNA synthesis. The positive stranded RNA genome is first replicated at virus induced membranous vesicles, creating a dsRNA genomic replication form. This dsRNA is then used as template to synthesize positive stranded RNA genomes. ss(+)RNA genomes are either translated, replicated or encapsidated. The chain is Genome polyprotein from Homo sapiens (Human).